A 249-amino-acid polypeptide reads, in one-letter code: Long form salivary protein D7L (249 aa).

An N-terminal signal peptide occupies residues 1–19; that stretch reads MNAVITSLVFISLVGVGYS. Disulfide bonds link Cys-36–Cys-66 and Cys-62–Cys-112. Trp-49 contributes to the thromboxane A2 binding site. A leukotriene C4-binding site is contributed by Trp-52. Thromboxane A2 is bound at residue Tyr-63. The leukotriene C4 site is built by Gly-136 and Lys-154. Lys-154 is a thromboxane A2 binding site. 3 cysteine pairs are disulfide-bonded: Cys-162-Cys-178, Cys-174-Cys-221, and Cys-211-Cys-230.

This sequence belongs to the PBP/GOBP family.

It localises to the secreted. Modulates blood feeding of female sandflies on vertebrate species by binding and sequestering different mediators involved in the host response. Binds leukotriene C4, leukotriene D4, leukotriene E4 and U-46619, a stable analog of thromboxane A2. Does not bind histamine or serotonin. Inhibits platelet aggregation induced by low concentrations of collagen in thromboxane A2-dependent manner. The polypeptide is Long form salivary protein D7L (Phlebotomus duboscqi (Sandfly)).